A 156-amino-acid chain; its full sequence is 17.7 kDa class II heat shock protein (156 aa).

Positions 39–156 constitute a sHSP domain; sequence DAKAMAATPA…KPKTIQVQVA (118 aa).

Belongs to the small heat shock protein (HSP20) family. In terms of assembly, may form oligomeric structures.

Its subcellular location is the cytoplasm. This chain is 17.7 kDa class II heat shock protein (HSP17.7), found in Arabidopsis thaliana (Mouse-ear cress).